The primary structure comprises 321 residues: Arabinan endo-1,5-alpha-L-arabinosidase A (321 aa).

A signal peptide spans 1 to 19 (MYSLLTALSVPLLAGLAHG). Asp34 serves as the catalytic Proton acceptor. The N-linked (GlcNAc...) asparagine glycan is linked to Asn192. The Proton donor role is filled by Glu200.

It belongs to the glycosyl hydrolase 43 family.

It is found in the secreted. It catalyses the reaction Endohydrolysis of (1-&gt;5)-alpha-arabinofuranosidic linkages in (1-&gt;5)-arabinans.. Its pathway is glycan metabolism; L-arabinan degradation. Functionally, endo-1,5-alpha-L-arabinanase involved in degradation of pectin. Its preferred substrate is linear 1,5-alpha-L-arabinan. This Aspergillus aculeatus protein is Arabinan endo-1,5-alpha-L-arabinosidase A (abnA).